Consider the following 78-residue polypeptide: MIFARRLVLEVTYVSKRASVLNLKSENDHFLSRPRISESLPTSGEVGIAKVPAKLASALPPYSVFAPVSLSFVRMNCG.

This is an uncharacterized protein from Schizosaccharomyces pombe (strain 972 / ATCC 24843) (Fission yeast).